The chain runs to 988 residues: Protein argonaute 10 (988 aa).

Residues 1–11 (MPIRQMKDSSE) show a composition bias toward basic and acidic residues. The interval 1-103 (MPIRQMKDSS…PPSQTTSSAV (103 aa)) is disordered. Residues 41–57 (PVTVTTPATVTQSQASS) are compositionally biased toward low complexity. Residues 64-73 (NRSRRRNRGG) are compositionally biased toward basic residues. The region spanning 338 to 451 (PVIEFVAQLL…LPMEACKIVE (114 aa)) is the PAZ domain. A Piwi domain is found at 625-946 (LLLAILPDNN…AAFRARFYLE (322 aa)).

This sequence belongs to the argonaute family. Ago subfamily. Interacts with GATA18/HAN and KNAT1/BP. Interacts with RICE1 and RICE2 that act as cofactors. Expressed in roots, stems, leaves, developing embryo, siliques, inflorescences, provascular tissue, shoot apical meristem (SAM) and adaxial (upper) sides of lateral organ primordia. Observed in the floral meristem, the adaxial side of sepal primordia, and the provascular tissue.

It localises to the cytoplasm. Functionally, involved in RNA-mediated post-transcriptional gene silencing (PTGS). Main component of the RNA-induced silencing complex (RISC) that binds to a short guide RNA such as a microRNA (miRNA) or small interfering RNA (siRNA). RISC uses the mature miRNA or siRNA as a guide for slicer-directed cleavage of homologous mRNAs to repress gene expression. Required for reliable formation of primary and axillary shoot apical meristems. Specifies leaf adaxial identity by repressing the miR165 and miR166 microRNAs in the embryonic shoot apex, in the shoot apical meristem (SAM) and leaf. Represses the microRNA miR398 which targets CCS1 chaperone mRNAs for translational inhibition. Acts as a negative regulator of AGO1 protein level. Like AGO1, is required for stem cell function and organ polarity. Unlike AGO1, is not subjected to small RNA-mediated repression itself. Essential for multiple processes in development. Coregulates, with GATA18/HAN, the shoot apical meristem (SAM) organization. This chain is Protein argonaute 10, found in Arabidopsis thaliana (Mouse-ear cress).